A 223-amino-acid polypeptide reads, in one-letter code: Endonuclease V (223 aa).

Positions 35 and 103 each coordinate Mg(2+).

Belongs to the endonuclease V family. Requires Mg(2+) as cofactor.

The protein resides in the cytoplasm. It catalyses the reaction Endonucleolytic cleavage at apurinic or apyrimidinic sites to products with a 5'-phosphate.. Its function is as follows. DNA repair enzyme involved in the repair of deaminated bases. Selectively cleaves double-stranded DNA at the second phosphodiester bond 3' to a deoxyinosine leaving behind the intact lesion on the nicked DNA. This is Endonuclease V from Escherichia coli O45:K1 (strain S88 / ExPEC).